The following is a 476-amino-acid chain: UDP-glycosyltransferase 71C3 (476 aa).

Residues Ser290, 349 to 351, 366 to 374, and 388 to 391 contribute to the UDP-alpha-D-glucose site; these read APQ, HCGWNSVLE, and YAEQ.

The protein belongs to the UDP-glycosyltransferase family.

Possesses low quercetin 3-O-glucosyltransferase activity in vitro. The sequence is that of UDP-glycosyltransferase 71C3 (UGT71C3) from Arabidopsis thaliana (Mouse-ear cress).